Here is a 2283-residue protein sequence, read N- to C-terminus: DNA polymerase epsilon catalytic subunit A (2283 aa).

Residues 1 to 32 (MVLRNSGRRHPEPGADGEGSRDDGPSSSVSAL) are disordered. Residues 9-24 (RHPEPGADGEGSRDDG) are compositionally biased toward basic and acidic residues. Phosphoserine occurs at positions 1184, 1296, and 1316. 2 disordered regions span residues 1935–1968 (GQVKEQDSQAREETDEEEEDKEKDEEEEGMGESE) and 2014–2041 (HSAPGSTPVKRKGASQFSQESEGATGSL). The span at 1936-1946 (QVKEQDSQARE) shows a compositional bias: basic and acidic residues. The segment covering 1947–1968 (ETDEEEEDKEKDEEEEGMGESE) has biased composition (acidic residues). A compositionally biased stretch (polar residues) spans 2028–2037 (SQFSQESEGA). Zn(2+) is bound by residues cysteine 2155, cysteine 2158, cysteine 2184, and cysteine 2187. Residues 2155–2187 (CHSCNFCRDLDLCKDSSFSQDGAILPQWLCSNC) form a CysA-type zinc finger. Residues cysteine 2218, cysteine 2221, cysteine 2233, and cysteine 2235 each coordinate [4Fe-4S] cluster. The short motif at 2218–2235 (CLKCRGMKETHMPVYCSC) is the CysB motif element.

Belongs to the DNA polymerase type-B family. In terms of assembly, component of the DNA polymerase epsilon complex consisting of four subunits: the catalytic subunit POLE and the accessory subunits POLE2, POLE3 and POLE4. Interacts with RAD17 and TOPBP1. It depends on [4Fe-4S] cluster as a cofactor.

Its subcellular location is the nucleus. The catalysed reaction is DNA(n) + a 2'-deoxyribonucleoside 5'-triphosphate = DNA(n+1) + diphosphate. In terms of biological role, catalytic component of the DNA polymerase epsilon complex. Participates in chromosomal DNA replication. Required during synthesis of the leading DNA strands at the replication fork and binds at/or near replication origins and moves along DNA with the replication fork. Has 3'-5' proofreading exonuclease activity that corrects errors arising during DNA replication. It is also involved in DNA synthesis during DNA repair. The sequence is that of DNA polymerase epsilon catalytic subunit A (Pole) from Mus musculus (Mouse).